The primary structure comprises 228 residues: Geranylgeranylglyceryl phosphate synthase (228 aa).

Lys13 is a binding site for sn-glycerol 1-phosphate. 2 residues coordinate Mg(2+): Asp15 and Thr41. Residues 159–164 (YVEYSG), Gly189, and 209–210 (GN) each bind sn-glycerol 1-phosphate.

Belongs to the GGGP/HepGP synthase family. Group I subfamily. Mg(2+) serves as cofactor.

The protein localises to the cytoplasm. It carries out the reaction sn-glycerol 1-phosphate + (2E,6E,10E)-geranylgeranyl diphosphate = sn-3-O-(geranylgeranyl)glycerol 1-phosphate + diphosphate. The protein operates within membrane lipid metabolism; glycerophospholipid metabolism. Prenyltransferase that catalyzes the transfer of the geranylgeranyl moiety of geranylgeranyl diphosphate (GGPP) to the C3 hydroxyl of sn-glycerol-1-phosphate (G1P). This reaction is the first ether-bond-formation step in the biosynthesis of archaeal membrane lipids. This Methanosphaerula palustris (strain ATCC BAA-1556 / DSM 19958 / E1-9c) protein is Geranylgeranylglyceryl phosphate synthase.